Here is a 308-residue protein sequence, read N- to C-terminus: Testis-specific Y-encoded protein 3 (308 aa).

It belongs to the nucleosome assembly protein (NAP) family.

Its subcellular location is the cytoplasm. The protein localises to the nucleus. Its function is as follows. May be involved in sperm differentiation and proliferation. The sequence is that of Testis-specific Y-encoded protein 3 (TSPY3) from Homo sapiens (Human).